Consider the following 356-residue polypeptide: 3-dehydroquinate synthase (356 aa).

NAD(+)-binding positions include 69 to 74, 103 to 107, 127 to 128, Lys140, Lys149, and 167 to 170; these read DGEKFK, GVIGD, TT, and CLKT. Zn(2+) contacts are provided by Glu182, His245, and His262.

Belongs to the sugar phosphate cyclases superfamily. Dehydroquinate synthase family. Requires Co(2+) as cofactor. Zn(2+) is required as a cofactor. NAD(+) serves as cofactor.

It is found in the cytoplasm. It catalyses the reaction 7-phospho-2-dehydro-3-deoxy-D-arabino-heptonate = 3-dehydroquinate + phosphate. It functions in the pathway metabolic intermediate biosynthesis; chorismate biosynthesis; chorismate from D-erythrose 4-phosphate and phosphoenolpyruvate: step 2/7. In terms of biological role, catalyzes the conversion of 3-deoxy-D-arabino-heptulosonate 7-phosphate (DAHP) to dehydroquinate (DHQ). The sequence is that of 3-dehydroquinate synthase from Psychromonas ingrahamii (strain DSM 17664 / CCUG 51855 / 37).